A 299-amino-acid polypeptide reads, in one-letter code: Tyrosine recombinase XerC (299 aa).

The Core-binding (CB) domain occupies 1-85 (MDQHLDAYCM…AVRGFYKYLN (85 aa)). A Tyr recombinase domain is found at 106–285 (RLPKTLDTDR…DFQHLATVYD (180 aa)). Residues R146, K170, H237, R240, and H263 contribute to the active site. The active-site O-(3'-phospho-DNA)-tyrosine intermediate is the Y272.

It belongs to the 'phage' integrase family. XerC subfamily. Forms a cyclic heterotetrameric complex composed of two molecules of XerC and two molecules of XerD.

The protein resides in the cytoplasm. In terms of biological role, site-specific tyrosine recombinase, which acts by catalyzing the cutting and rejoining of the recombining DNA molecules. The XerC-XerD complex is essential to convert dimers of the bacterial chromosome into monomers to permit their segregation at cell division. It also contributes to the segregational stability of plasmids. This is Tyrosine recombinase XerC from Pseudomonas syringae pv. syringae (strain B728a).